A 290-amino-acid chain; its full sequence is tRNA dimethylallyltransferase (290 aa).

ATP is bound at residue 11–18 (GPTASGKS). Residue 13 to 18 (TASGKS) participates in substrate binding. Interaction with substrate tRNA regions lie at residues 36–39 (DSMQ) and 158–162 (QRIVR).

It belongs to the IPP transferase family. As to quaternary structure, monomer. Mg(2+) serves as cofactor.

The enzyme catalyses adenosine(37) in tRNA + dimethylallyl diphosphate = N(6)-dimethylallyladenosine(37) in tRNA + diphosphate. Its function is as follows. Catalyzes the transfer of a dimethylallyl group onto the adenine at position 37 in tRNAs that read codons beginning with uridine, leading to the formation of N6-(dimethylallyl)adenosine (i(6)A). This Bartonella henselae (strain ATCC 49882 / DSM 28221 / CCUG 30454 / Houston 1) (Rochalimaea henselae) protein is tRNA dimethylallyltransferase.